Consider the following 622-residue polypeptide: WD repeat-containing protein 48 (622 aa).

Residue tyrosine 28 is modified to Phosphotyrosine. WD repeat units follow at residues 28-67 (YNRN…QDPY), 73-112 (HHTD…CMST), 115-154 (THKD…ALTA), 166-205 (GNKD…KLMK), 208-247 (GHTD…CIAT), 250-289 (VHDE…IRVL), 292-334 (EEKA…NFRA), and 358-397 (KGGA…GFSS). The residue at position 214 (lysine 214) is an N6-acetyllysine. Lysine 523 is modified (N6-acetyllysine). Positions 552–573 (LDNESQTTSSSNNEKPGEQEKE) are disordered. Over residues 554-565 (NESQTTSSSNNE) the composition is skewed to low complexity. Threonine 558 carries the phosphothreonine modification.

Belongs to the WD repeat WDR48 family. Interacts with USP46. Interacts with USP1. Interacts with USP12. Component of the USP12-WDR20-WDR48 deubiquitinating complex. Component of the USP12-DMWD-WDR48 deubiquitinating complex. Interacts with PHLPP1. Interacts with RAD51AP1; the interaction is direct and promotes formation of a trimeric complex with RAD51 via RAD51AP1. Interacts with ATAD5; the interaction regulates USP1-mediated PCNA deubiquitination. Interacts with RAD51; the interaction is enhanced under replication stress. Interacts with ITCH; the interaction is more efficient when both USP12 and WDR48/UAF1 are involved and may facilitate recruitment of the USP12 deubiquitinating complex to Notch.

The protein localises to the nucleus. The protein resides in the cytoplasm. It is found in the lysosome. It localises to the late endosome. Regulator of deubiquitinating complexes, which acts as a strong activator of USP1, USP12 and USP46. Enhances the USP1-mediated deubiquitination of FANCD2; USP1 being almost inactive by itself. Activates deubiquitination by increasing the catalytic turnover without increasing the affinity of deubiquitinating enzymes for the substrate. Also activates deubiquitinating activity of complexes containing USP12. Docks at the distal end of the USP12 fingers domain and induces a cascade of structural changes leading to the activation of the enzyme. Together with RAD51AP1, promotes DNA repair by stimulating RAD51-mediated homologous recombination. Binds single-stranded DNA (ssDNA) and double-stranded DNA (dsDNA). DNA-binding is required both for USP1-mediated deubiquitination of FANCD2 and stimulation of RAD51-mediated homologous recombination: both WDR48/UAF1 and RAD51AP1 have coordinated role in DNA-binding during these processes. Together with ATAD5 and by regulating USP1 activity, has a role in PCNA-mediated translesion synthesis (TLS) by deubiquitinating monoubiquitinated PCNA. Together with ATAD5, has a role in recruiting RAD51 to stalled forks during replication stress. This chain is WD repeat-containing protein 48 (WDR48), found in Macaca fascicularis (Crab-eating macaque).